The primary structure comprises 365 residues: Histidinol-phosphate aminotransferase 2 (365 aa).

N6-(pyridoxal phosphate)lysine is present on Lys221.

Belongs to the class-II pyridoxal-phosphate-dependent aminotransferase family. Histidinol-phosphate aminotransferase subfamily. As to quaternary structure, homodimer. Pyridoxal 5'-phosphate serves as cofactor.

The enzyme catalyses L-histidinol phosphate + 2-oxoglutarate = 3-(imidazol-4-yl)-2-oxopropyl phosphate + L-glutamate. It functions in the pathway amino-acid biosynthesis; L-histidine biosynthesis; L-histidine from 5-phospho-alpha-D-ribose 1-diphosphate: step 7/9. The protein is Histidinol-phosphate aminotransferase 2 (hisC2) of Bradyrhizobium diazoefficiens (strain JCM 10833 / BCRC 13528 / IAM 13628 / NBRC 14792 / USDA 110).